Here is a 475-residue protein sequence, read N- to C-terminus: Ribulose bisphosphate carboxylase large chain (475 aa).

The propeptide occupies 1–2 (MS). Residue Pro3 is modified to N-acetylproline. Lys14 is subject to N6,N6,N6-trimethyllysine. Substrate contacts are provided by Asn123 and Thr173. Lys175 (proton acceptor) is an active-site residue. Lys177 serves as a coordination point for substrate. Mg(2+) is bound by residues Lys201, Asp203, and Glu204. Position 201 is an N6-carboxylysine (Lys201). The active-site Proton acceptor is the His294. The substrate site is built by Arg295, His327, and Ser379.

Belongs to the RuBisCO large chain family. Type I subfamily. In terms of assembly, heterohexadecamer of 8 large chains and 8 small chains; disulfide-linked. The disulfide link is formed within the large subunit homodimers. The cofactor is Mg(2+). Post-translationally, the disulfide bond which can form in the large chain dimeric partners within the hexadecamer appears to be associated with oxidative stress and protein turnover.

It is found in the plastid. The protein resides in the chloroplast. The catalysed reaction is 2 (2R)-3-phosphoglycerate + 2 H(+) = D-ribulose 1,5-bisphosphate + CO2 + H2O. It catalyses the reaction D-ribulose 1,5-bisphosphate + O2 = 2-phosphoglycolate + (2R)-3-phosphoglycerate + 2 H(+). Its function is as follows. RuBisCO catalyzes two reactions: the carboxylation of D-ribulose 1,5-bisphosphate, the primary event in carbon dioxide fixation, as well as the oxidative fragmentation of the pentose substrate in the photorespiration process. Both reactions occur simultaneously and in competition at the same active site. This Lotus japonicus (Lotus corniculatus var. japonicus) protein is Ribulose bisphosphate carboxylase large chain.